The primary structure comprises 232 residues: Ubiquinone biosynthesis O-methyltransferase (232 aa).

R36, G55, D76, and M120 together coordinate S-adenosyl-L-methionine.

The protein belongs to the methyltransferase superfamily. UbiG/COQ3 family.

It catalyses the reaction a 3-demethylubiquinol + S-adenosyl-L-methionine = a ubiquinol + S-adenosyl-L-homocysteine + H(+). The enzyme catalyses a 3-(all-trans-polyprenyl)benzene-1,2-diol + S-adenosyl-L-methionine = a 2-methoxy-6-(all-trans-polyprenyl)phenol + S-adenosyl-L-homocysteine + H(+). Its pathway is cofactor biosynthesis; ubiquinone biosynthesis. O-methyltransferase that catalyzes the 2 O-methylation steps in the ubiquinone biosynthetic pathway. The polypeptide is Ubiquinone biosynthesis O-methyltransferase (Burkholderia mallei (strain ATCC 23344)).